Consider the following 191-residue polypeptide: Classical arabinogalactan protein 9 (191 aa).

A signal peptide spans 1–20 (MARSFAIAVICIVLIAGVTG). Residues 20-172 (GQAPTSPPTA…SPTDVNDQNG (153 aa)) are disordered. The residue at position 21 (Gln21) is a Pyrrolidone carboxylic acid. 5 positions are modified to 4-hydroxyproline: Pro23, Pro26, Pro27, Pro31, and Pro33. Positions 24 to 146 (TSPPTATPAP…PSPSSSPPLP (123 aa)) are enriched in pro residues. 4 O-linked (Ara...) hydroxyproline glycosylation sites follow: Pro26, Pro27, Pro31, and Pro33. The span at 155 to 172 (TDSISPAPSPTDVNDQNG) shows a compositional bias: polar residues. Gly172 is lipidated: GPI-anchor amidated glycine. Positions 173–191 (ASKMVSSLVFGSVLVWFMI) are cleaved as a propeptide — removed in mature form.

Belongs to the classical AGP family. Post-translationally, O-glycosylated on hydroxyprolines; noncontiguous hydroxylproline residues are glycosylated with arabinogalactan. Predominantly expressed in flowers and at a lower level in leaves and siliques.

The protein localises to the cell membrane. Its function is as follows. Proteoglycan that seems to be implicated in diverse developmental roles such as differentiation, cell-cell recognition, embryogenesis and programmed cell death. The polypeptide is Classical arabinogalactan protein 9 (AGP9) (Arabidopsis thaliana (Mouse-ear cress)).